A 385-amino-acid chain; its full sequence is Na(+)/H(+) antiporter NhaA (385 aa).

The next 11 membrane-spanning stretches (helical) occupy residues 9–29, 45–65, 87–107, 114–134, 155–175, 198–218, 220–235, 245–265, 282–302, 312–332, and 345–365; these read YSAI…NVLD, IFGL…VFFF, IIPG…YLSV, GWPV…AIFG, AGIV…WIIV, TFLI…SVYQ, GIHA…IMLN, ALEP…AAMV, ILLG…IIAL, FFNL…SLLM, and QGVI…IILM.

Belongs to the NhaA Na(+)/H(+) (TC 2.A.33) antiporter family.

The protein localises to the cell membrane. The enzyme catalyses Na(+)(in) + 2 H(+)(out) = Na(+)(out) + 2 H(+)(in). In terms of biological role, na(+)/H(+) antiporter that extrudes sodium in exchange for external protons. This chain is Na(+)/H(+) antiporter NhaA, found in Tropheryma whipplei (strain Twist) (Whipple's bacillus).